The primary structure comprises 340 residues: Selenide, water dikinase (340 aa).

The active site involves Cys13. Residues Lys16 and 43 to 45 (ASD) contribute to the ATP site. Asp46 lines the Mg(2+) pocket. ATP contacts are provided by residues Asp63, Asp86, and 133 to 135 (GHS). Mg(2+) is bound at residue Asp86. Residue Asp221 participates in Mg(2+) binding.

This sequence belongs to the selenophosphate synthase 1 family. Class I subfamily. As to quaternary structure, homodimer. Requires Mg(2+) as cofactor.

The catalysed reaction is hydrogenselenide + ATP + H2O = selenophosphate + AMP + phosphate + 2 H(+). Functionally, synthesizes selenophosphate from selenide and ATP. This Desulfitobacterium hafniense (strain DSM 10664 / DCB-2) protein is Selenide, water dikinase.